Here is a 378-residue protein sequence, read N- to C-terminus: Spermidine/putrescine import ATP-binding protein PotA (378 aa).

Residues 18–248 (VQLAGIRKCF…PKNLFVAGFI (231 aa)) enclose the ABC transporter domain. 50-57 (GPSGCGKT) contributes to the ATP binding site.

The protein belongs to the ABC transporter superfamily. Spermidine/putrescine importer (TC 3.A.1.11.1) family. The complex is composed of two ATP-binding proteins (PotA), two transmembrane proteins (PotB and PotC) and a solute-binding protein (PotD).

The protein resides in the cell inner membrane. The enzyme catalyses ATP + H2O + polyamine-[polyamine-binding protein]Side 1 = ADP + phosphate + polyamineSide 2 + [polyamine-binding protein]Side 1.. Functionally, part of the ABC transporter complex PotABCD involved in spermidine/putrescine import. Responsible for energy coupling to the transport system. In Shigella boydii serotype 4 (strain Sb227), this protein is Spermidine/putrescine import ATP-binding protein PotA.